A 128-amino-acid polypeptide reads, in one-letter code: Small ribosomal subunit protein uS13 (128 aa).

The segment covering 95–118 has biased composition (basic residues); that stretch reads GLPVRGQRTHTNARTRKGPKKGLV. The disordered stretch occupies residues 95 to 128; the sequence is GLPVRGQRTHTNARTRKGPKKGLVRKAAAPAPMA.

Belongs to the universal ribosomal protein uS13 family. In terms of assembly, part of the 30S ribosomal subunit. Forms a loose heterodimer with protein S19. Forms two bridges to the 50S subunit in the 70S ribosome.

Functionally, located at the top of the head of the 30S subunit, it contacts several helices of the 16S rRNA. In the 70S ribosome it contacts the 23S rRNA (bridge B1a) and protein L5 of the 50S subunit (bridge B1b), connecting the 2 subunits; these bridges are implicated in subunit movement. Contacts the tRNAs in the A and P-sites. This chain is Small ribosomal subunit protein uS13, found in Anaeromyxobacter dehalogenans (strain 2CP-1 / ATCC BAA-258).